The chain runs to 506 residues: Maturase K (506 aa).

The protein belongs to the intron maturase 2 family. MatK subfamily.

It is found in the plastid. Its subcellular location is the chloroplast. In terms of biological role, usually encoded in the trnK tRNA gene intron. Probably assists in splicing its own and other chloroplast group II introns. In Carica papaya (Papaya), this protein is Maturase K.